Here is a 1141-residue protein sequence, read N- to C-terminus: DNA polymerase II large subunit (1141 aa).

Positions 567-587 (AGTRVGGRMGRPGKSAPRKMK) are disordered.

It belongs to the archaeal DNA polymerase II family. As to quaternary structure, heterodimer of a large subunit and a small subunit.

The catalysed reaction is DNA(n) + a 2'-deoxyribonucleoside 5'-triphosphate = DNA(n+1) + diphosphate. The enzyme catalyses Exonucleolytic cleavage in the 3'- to 5'-direction to yield nucleoside 5'-phosphates.. Its function is as follows. Possesses two activities: a DNA synthesis (polymerase) and an exonucleolytic activity that degrades single-stranded DNA in the 3'- to 5'-direction. Has a template-primer preference which is characteristic of a replicative DNA polymerase. The chain is DNA polymerase II large subunit from Methanocorpusculum labreanum (strain ATCC 43576 / DSM 4855 / Z).